The primary structure comprises 145 residues: D-aminoacyl-tRNA deacylase (145 aa).

A Gly-cisPro motif, important for rejection of L-amino acids motif is present at residues 137 to 138; sequence GP.

The protein belongs to the DTD family. Homodimer.

The protein resides in the cytoplasm. The enzyme catalyses glycyl-tRNA(Ala) + H2O = tRNA(Ala) + glycine + H(+). It catalyses the reaction a D-aminoacyl-tRNA + H2O = a tRNA + a D-alpha-amino acid + H(+). In terms of biological role, an aminoacyl-tRNA editing enzyme that deacylates mischarged D-aminoacyl-tRNAs. Also deacylates mischarged glycyl-tRNA(Ala), protecting cells against glycine mischarging by AlaRS. Acts via tRNA-based rather than protein-based catalysis; rejects L-amino acids rather than detecting D-amino acids in the active site. By recycling D-aminoacyl-tRNA to D-amino acids and free tRNA molecules, this enzyme counteracts the toxicity associated with the formation of D-aminoacyl-tRNA entities in vivo and helps enforce protein L-homochirality. The chain is D-aminoacyl-tRNA deacylase from Salmonella paratyphi C (strain RKS4594).